We begin with the raw amino-acid sequence, 448 residues long: 26S proteasome regulatory subunit 4 homolog (448 aa).

Residues 1-16 (MGQGTPGGMGKQGGAP) are compositionally biased toward gly residues. Disordered regions lie at residues 1-56 (MGQG…AAAR) and 93-112 (LRPTEDKTEEDRSKVDDLRG). Basic and acidic residues-rich tracts occupy residues 17 to 33 (GDRKPGGDGDKKDRKFE) and 93 to 111 (LRPTEDKTEEDRSKVDDLR). ATP is bound at residue 234–241 (GEPGTGKT).

This sequence belongs to the AAA ATPase family.

The protein resides in the cytoplasm. It is found in the nucleus. In terms of biological role, the 26S proteasome is involved in the ATP-dependent degradation of ubiquitinated proteins. The regulatory (or ATPase) complex confers ATP dependency and substrate specificity to the 26S complex. This is 26S proteasome regulatory subunit 4 homolog (TBP2) from Oryza sativa subsp. japonica (Rice).